The sequence spans 161 residues: DNA-directed RNA polymerase 18 kDa subunit (161 aa).

This sequence belongs to the poxviridae DNA-directed RNA polymerase 18 kDa subunit family. The DNA-dependent RNA polymerase used for intermediate and late genes expression consists of eight subunits Rpo30/OPG66, Rpo7/OPG90, Rpo22/OPG103, Rpo147/OPG105, Rpo18/OPG119, Rpo19/OPG131, Rpo132/OPG151 and Rpo35/OPG156. The same holoenzyme, with the addition of the transcription-specificity factor OPG109, is used for early gene expression.

It localises to the virion. The enzyme catalyses RNA(n) + a ribonucleoside 5'-triphosphate = RNA(n+1) + diphosphate. Its function is as follows. Part of the DNA-dependent RNA polymerase which catalyzes the transcription of viral DNA into RNA using the four ribonucleoside triphosphates as substrates. Responsible for the transcription of early, intermediate and late genes. DNA-dependent RNA polymerase associates with the early transcription factor (ETF), itself composed of OPG118 and OPG133, thereby allowing the early genes transcription. Late transcription, and probably also intermediate transcription, require newly synthesized RNA polymerase. The polypeptide is DNA-directed RNA polymerase 18 kDa subunit (OPG119) (Vaccinia virus (strain Copenhagen) (VACV)).